The chain runs to 220 residues: Splicing factor U2AF 26 kDa subunit (220 aa).

Ala-2 carries the post-translational modification N-acetylalanine. The segment at Glu-12 to Pro-40 adopts a C3H1-type 1 zinc-finger fold. The region spanning Ser-65–Val-147 is the RRM domain. Residues Asp-149–Pro-176 form a C3H1-type 2 zinc finger. Residues Leu-185 to Phe-220 are disordered. Basic residues predominate over residues Gly-189–Asn-208. A compositionally biased stretch (basic and acidic residues) spans His-209–Phe-220.

It belongs to the splicing factor SR family. In terms of assembly, interacts with GFI1, U2AF2 and C1QBP. In terms of tissue distribution, isoform 2 is widely expressed. Isoform 3 is highly expressed in heart, brain and lung, lower expressed in thymus and much lower expressed in peripheral blood leukocytes.

It localises to the nucleus. The protein localises to the nucleus speckle. The protein resides in the cytoplasm. RNA-binding protein that function as a pre-mRNA splicing factor. Plays a critical role in both constitutive and enhancer-dependent splicing by mediating protein-protein interactions and protein-RNA interactions required for accurate 3'-splice site selection. Acts by enhancing the binding of U2AF2 to weak pyrimidine tracts. Also participates in the regulation of alternative pre-mRNA splicing. Activates exon 5 skipping of PTPRC during T-cell activation; an event reversed by GFI1. Binds to RNA at the AG dinucleotide at the 3'-splice site. Shows a preference for AGC or AGA. The chain is Splicing factor U2AF 26 kDa subunit (U2AF1L4) from Homo sapiens (Human).